Here is a 97-residue protein sequence, read N- to C-terminus: Large ribosomal subunit protein bL28 (97 aa).

It belongs to the bacterial ribosomal protein bL28 family.

This is Large ribosomal subunit protein bL28 from Rickettsia africae (strain ESF-5).